Here is a 367-residue protein sequence, read N- to C-terminus: Cystinosin (367 aa).

An N-terminal signal peptide occupies residues 1 to 22 (MIRRWLVIFILFPLQLIEKCES). Residues 23–125 (TVDFSVPPIV…LVIHSNIVSI (103 aa)) lie on the Lumenal side of the membrane. Residues Asn51, Asn66, Asn84, Asn104, and Asn107 are each glycosylated (N-linked (GlcNAc...) asparagine). In terms of domain architecture, PQ-loop 1 spans 123-189 (VSIINQVIGW…LFWVPSIKEQ (67 aa)). A helical membrane pass occupies residues 126-150 (INQVIGWIYFVAWSVSFYPQVITNW). The Cytoplasmic segment spans residues 151–159 (RRKSVVGLS). A helical membrane pass occupies residues 160 to 179 (FDFVVLNLMGFVAYSVFNIG). Asn166 is a binding site for L-cystine. The Lumenal segment spans residues 180-202 (LFWVPSIKEQFLLKYPNGVNPVD). The chain crosses the membrane as a helical span at residues 203–225 (SNDVFFSLHAVALTLVVIVQCLL). Asp205 contacts H(+). Topologically, residues 226–234 (YERGSQRVS) are cytoplasmic. Residues 235 to 257 (WLAISFLVLSWLFTLIALIMAAV) form a helical membrane-spanning segment. Topologically, residues 258-263 (GATTWL) are lumenal. Positions 263 to 328 (LQFLFCFSYI…QSYNNDQWTL (66 aa)) constitute a PQ-loop 2 domain. Residues 264–289 (QFLFCFSYIKLAVTLVKYFPQAYMNF) form a helical membrane-spanning segment. L-cystine is bound by residues Lys273, Lys280, and Tyr281. The Cytoplasmic segment spans residues 290–298 (HYKSTEGWS). A helical transmembrane segment spans residues 299 to 308 (IGNVLLDFTG). 2 residues coordinate L-cystine: Asn301 and Asp305. Asp305 provides a ligand contact to H(+). The Lumenal segment spans residues 309-331 (GSFSLLQMFLQSYNNDQWTLIFG). The chain crosses the membrane as a helical span at residues 332 to 354 (DPTKFGLGIFSIIFDVVFFIQHF). Asp346 serves as a coordination point for H(+). Over 355–367 (CLYRKKPGYDQLN) the chain is Cytoplasmic. A Lysosomal targeting motif motif is present at residues 362 to 366 (GYDQL).

This sequence belongs to the cystinosin family. In terms of assembly, interacts with components of the V-ATPase complex. Interacts with components of the Ragulator complex. Interacts with RRAGA/RagA and RRAGC/RagC. Interacts with AP-3 complex subunit mu (AP3M1 or AP3M2).

It is found in the lysosome membrane. The protein resides in the melanosome membrane. It catalyses the reaction L-cystine(out) + H(+)(out) = L-cystine(in) + H(+)(in). With respect to regulation, switches between a lumen- and a cytosol-open conformation: pH induces conformational changes and shifts the equilibrium to facilitate the transition between the lumen- and cytosol-open conformation, thereby promoting cystine transport. Protonation of specific aspartate residues (Asp-205, Asp-305 and Asp-346) favors the cytosol-open conformation. Its function is as follows. Cystine/H(+) symporter that mediates export of cystine, the oxidized dimer of cysteine, from lysosomes. Plays an important role in melanin synthesis by catalyzing cystine export from melanosomes, possibly by inhibiting pheomelanin synthesis. In addition to cystine export, also acts as a positive regulator of mTORC1 signaling in kidney proximal tubular cells, via interactions with components of the v-ATPase and Ragulator complexes. Also involved in small GTPase-regulated vesicle trafficking and lysosomal localization of LAMP2A, independently of cystine transporter activity. This chain is Cystinosin, found in Bos taurus (Bovine).